The sequence spans 311 residues: Geranylgeranyl transferase type-2 subunit beta (311 aa).

PFTB repeat units follow at residues 54–95 (KERI…AMLD), 102–143 (KDKV…AILG), 150–191 (KNTA…KILN), 197–239 (DEEL…AIIG), and 246–288 (RNQL…SLLQ). Geranylgeranyl diphosphate is bound by residues 176–178 (HGA) and 218–230 (RPEKLPDSCYGWW). Zn(2+) contacts are provided by aspartate 224, cysteine 226, and histidine 276.

This sequence belongs to the protein prenyltransferase subunit beta family. Heterodimer of an alpha and a beta subunit. Zn(2+) is required as a cofactor.

It catalyses the reaction geranylgeranyl diphosphate + L-cysteinyl-[protein] = S-geranylgeranyl-L-cysteinyl-[protein] + diphosphate. In terms of biological role, catalyzes the transfer of a geranyl-geranyl moiety from geranyl-geranyl pyrophosphate to proteins having the C-terminal -XCC or -XCXC, where both cysteines may become modified. This chain is Geranylgeranyl transferase type-2 subunit beta (ptb1), found in Schizosaccharomyces pombe (strain 972 / ATCC 24843) (Fission yeast).